Reading from the N-terminus, the 205-residue chain is Peptidyl-tRNA hydrolase (205 aa).

A tRNA-binding site is contributed by Y14. The active-site Proton acceptor is the H19. TRNA is bound by residues Y68, N70, and N116.

Belongs to the PTH family. In terms of assembly, monomer.

The protein localises to the cytoplasm. It carries out the reaction an N-acyl-L-alpha-aminoacyl-tRNA + H2O = an N-acyl-L-amino acid + a tRNA + H(+). In terms of biological role, hydrolyzes ribosome-free peptidyl-tRNAs (with 1 or more amino acids incorporated), which drop off the ribosome during protein synthesis, or as a result of ribosome stalling. Functionally, catalyzes the release of premature peptidyl moieties from peptidyl-tRNA molecules trapped in stalled 50S ribosomal subunits, and thus maintains levels of free tRNAs and 50S ribosomes. The polypeptide is Peptidyl-tRNA hydrolase (Caulobacter vibrioides (strain ATCC 19089 / CIP 103742 / CB 15) (Caulobacter crescentus)).